A 257-amino-acid chain; its full sequence is Thiazole synthase (257 aa).

K98 (schiff-base intermediate with DXP) is an active-site residue. Residues G159, 185–186 (AG), and 207–208 (NT) contribute to the 1-deoxy-D-xylulose 5-phosphate site.

This sequence belongs to the ThiG family. Homotetramer. Forms heterodimers with either ThiH or ThiS.

The protein resides in the cytoplasm. It carries out the reaction [ThiS sulfur-carrier protein]-C-terminal-Gly-aminoethanethioate + 2-iminoacetate + 1-deoxy-D-xylulose 5-phosphate = [ThiS sulfur-carrier protein]-C-terminal Gly-Gly + 2-[(2R,5Z)-2-carboxy-4-methylthiazol-5(2H)-ylidene]ethyl phosphate + 2 H2O + H(+). Its pathway is cofactor biosynthesis; thiamine diphosphate biosynthesis. Functionally, catalyzes the rearrangement of 1-deoxy-D-xylulose 5-phosphate (DXP) to produce the thiazole phosphate moiety of thiamine. Sulfur is provided by the thiocarboxylate moiety of the carrier protein ThiS. In vitro, sulfur can be provided by H(2)S. The protein is Thiazole synthase of Anaeromyxobacter dehalogenans (strain 2CP-C).